We begin with the raw amino-acid sequence, 515 residues long: ATP synthase subunit alpha (515 aa).

171-178 (GDRQTGKT) provides a ligand contact to ATP.

The protein belongs to the ATPase alpha/beta chains family. In terms of assembly, F-type ATPases have 2 components, CF(1) - the catalytic core - and CF(0) - the membrane proton channel. CF(1) has five subunits: alpha(3), beta(3), gamma(1), delta(1), epsilon(1). CF(0) has three main subunits: a(1), b(2) and c(9-12). The alpha and beta chains form an alternating ring which encloses part of the gamma chain. CF(1) is attached to CF(0) by a central stalk formed by the gamma and epsilon chains, while a peripheral stalk is formed by the delta and b chains.

The protein localises to the cell inner membrane. The enzyme catalyses ATP + H2O + 4 H(+)(in) = ADP + phosphate + 5 H(+)(out). Functionally, produces ATP from ADP in the presence of a proton gradient across the membrane. The alpha chain is a regulatory subunit. The protein is ATP synthase subunit alpha of Xanthomonas axonopodis pv. citri (strain 306).